Here is a 287-residue protein sequence, read N- to C-terminus: ATP synthase gamma chain (287 aa).

It belongs to the ATPase gamma chain family. As to quaternary structure, F-type ATPases have 2 components, CF(1) - the catalytic core - and CF(0) - the membrane proton channel. CF(1) has five subunits: alpha(3), beta(3), gamma(1), delta(1), epsilon(1). CF(0) has three main subunits: a, b and c.

The protein localises to the cell inner membrane. In terms of biological role, produces ATP from ADP in the presence of a proton gradient across the membrane. The gamma chain is believed to be important in regulating ATPase activity and the flow of protons through the CF(0) complex. The chain is ATP synthase gamma chain from Xanthomonas oryzae pv. oryzae (strain MAFF 311018).